The primary structure comprises 182 residues: Large ribosomal subunit protein uL16 (182 aa).

The protein belongs to the universal ribosomal protein uL16 family.

In Thermococcus gammatolerans (strain DSM 15229 / JCM 11827 / EJ3), this protein is Large ribosomal subunit protein uL16.